We begin with the raw amino-acid sequence, 195 residues long: MSSKEQKTPDEQVLDQKEAAKGQQADAAPETADVADPRDARIAELEAQLSELQQRERDNMLRVRAEADNVRRRAEMDVEKAHKFAVEKFASEMLPVIDNLERALDTADKANESLAAMIEGVELTLKSLLDAVRKFGIEVVGDVNVPFNPEVHQAMTMLPSADHQPNHVMMVMQKGYTLNGRLLRPAMVAVSKAQD.

Positions 1–20 are enriched in basic and acidic residues; that stretch reads MSSKEQKTPDEQVLDQKEAA. A disordered region spans residues 1-40; it reads MSSKEQKTPDEQVLDQKEAAKGQQADAAPETADVADPRDA.

Belongs to the GrpE family. Homodimer.

Its subcellular location is the cytoplasm. In terms of biological role, participates actively in the response to hyperosmotic and heat shock by preventing the aggregation of stress-denatured proteins, in association with DnaK and GrpE. It is the nucleotide exchange factor for DnaK and may function as a thermosensor. Unfolded proteins bind initially to DnaJ; upon interaction with the DnaJ-bound protein, DnaK hydrolyzes its bound ATP, resulting in the formation of a stable complex. GrpE releases ADP from DnaK; ATP binding to DnaK triggers the release of the substrate protein, thus completing the reaction cycle. Several rounds of ATP-dependent interactions between DnaJ, DnaK and GrpE are required for fully efficient folding. The sequence is that of Protein GrpE from Pectobacterium carotovorum subsp. carotovorum (strain PC1).